Consider the following 156-residue polypeptide: Small ribosomal subunit protein uS7 (156 aa).

This sequence belongs to the universal ribosomal protein uS7 family. In terms of assembly, part of the 30S ribosomal subunit. Contacts proteins S9 and S11.

Functionally, one of the primary rRNA binding proteins, it binds directly to 16S rRNA where it nucleates assembly of the head domain of the 30S subunit. Is located at the subunit interface close to the decoding center, probably blocks exit of the E-site tRNA. This Parasynechococcus marenigrum (strain WH8102) protein is Small ribosomal subunit protein uS7.